The following is a 431-amino-acid chain: MPVRLDRSSADFDQRFAAFLAAKREVSADVEAAARAIVDDVARRGDAALLEATAKFDRLTLDASGLRVSAAEIEAAVKACDAATLDALSLARDRIETYHRRQLPKDERFTDPLGVELGWRYTAIESAGLYVPGGTAAYPSSVLMNAVPAKVAGVSRLVMVVPSPDGKLNPLVLAAARLGGVTEIYRVGGAQAVAALAHGTATIAPVAKIVGPGNAYVAAAKRLVFGKVGIDMIAGPSEVLVIADDTGNADWIAADLLAQAEHDTSAQSILITDSARLAADVEKAVEAQLKTLPRTAIASASWADFGAIIMVKNLNDAIPLADAIAAEHLEIMTTDPDALAARIRNAGAVFLGAHTPEAIGDYVGGSNHVLPTARSARFSSGLSVHDFMKRTSILKCGPDQLRALGPAAMTLGKAEGLDAHSRSIGLRLNLS.

NAD(+) contacts are provided by Tyr130, Gln191, and Asn214. 3 residues coordinate substrate: Ser237, Gln259, and His262. Positions 259 and 262 each coordinate Zn(2+). Residues Glu327 and His328 each act as proton acceptor in the active site. His328, Asp361, Glu415, and His420 together coordinate substrate. Residue Asp361 coordinates Zn(2+). Residue His420 coordinates Zn(2+).

The protein belongs to the histidinol dehydrogenase family. It depends on Zn(2+) as a cofactor.

The catalysed reaction is L-histidinol + 2 NAD(+) + H2O = L-histidine + 2 NADH + 3 H(+). It participates in amino-acid biosynthesis; L-histidine biosynthesis; L-histidine from 5-phospho-alpha-D-ribose 1-diphosphate: step 9/9. Its function is as follows. Catalyzes the sequential NAD-dependent oxidations of L-histidinol to L-histidinaldehyde and then to L-histidine. The protein is Histidinol dehydrogenase of Bradyrhizobium diazoefficiens (strain JCM 10833 / BCRC 13528 / IAM 13628 / NBRC 14792 / USDA 110).